Consider the following 325-residue polypeptide: DNA repair and recombination protein RadA (325 aa).

An ATP-binding site is contributed by 107-114 (GEFGSGKT).

This sequence belongs to the eukaryotic RecA-like protein family.

In terms of biological role, involved in DNA repair and in homologous recombination. Binds and assemble on single-stranded DNA to form a nucleoprotein filament. Hydrolyzes ATP in a ssDNA-dependent manner and promotes DNA strand exchange between homologous DNA molecules. The polypeptide is DNA repair and recombination protein RadA (Methanosarcina acetivorans (strain ATCC 35395 / DSM 2834 / JCM 12185 / C2A)).